Here is a 206-residue protein sequence, read N- to C-terminus: Glycerol-3-phosphate acyltransferase (206 aa).

The next 6 membrane-spanning stretches (helical) occupy residues 4–24 (TAFAFVLAAYLIGSLSFAVIV), 53–73 (LAAALTLLGDGAKGWVAVALA), 86–106 (GIALCALAVLFGHMWPVFFGF), 116–136 (VGILFGINPWLALAALATWLF), 137–157 (MAFVVKISSLSAIVACVLAPV), and 160–180 (FFILGPHSVYFGTCIIIAIVV).

The protein belongs to the PlsY family. Probably interacts with PlsX.

Its subcellular location is the cell inner membrane. The enzyme catalyses an acyl phosphate + sn-glycerol 3-phosphate = a 1-acyl-sn-glycero-3-phosphate + phosphate. It participates in lipid metabolism; phospholipid metabolism. In terms of biological role, catalyzes the transfer of an acyl group from acyl-phosphate (acyl-PO(4)) to glycerol-3-phosphate (G3P) to form lysophosphatidic acid (LPA). This enzyme utilizes acyl-phosphate as fatty acyl donor, but not acyl-CoA or acyl-ACP. This is Glycerol-3-phosphate acyltransferase from Chromobacterium violaceum (strain ATCC 12472 / DSM 30191 / JCM 1249 / CCUG 213 / NBRC 12614 / NCIMB 9131 / NCTC 9757 / MK).